The sequence spans 84 residues: Small ribosomal subunit protein bS16 (84 aa).

The protein belongs to the bacterial ribosomal protein bS16 family.

This Burkholderia mallei (strain NCTC 10247) protein is Small ribosomal subunit protein bS16.